A 728-amino-acid chain; its full sequence is Methylmalonyl-CoA mutase large subunit (728 aa).

7 residues coordinate (R)-methylmalonyl-CoA: Y75, M78, R82, T85, R87, Y89, and S114. 2 residues coordinate cob(II)alamin: F117 and A139. (R)-methylmalonyl-CoA contacts are provided by T195 and Q197. 2 residues coordinate cob(II)alamin: V206 and R207. Residues R207, H244, R283, and S285 each coordinate (R)-methylmalonyl-CoA. Cob(II)alamin contacts are provided by G333, E370, A373, G609, H610, D611, R612, S655, L657, G686, and T709. Residues 597 to 728 form the B12-binding domain; the sequence is RPRILLAKMG…VKKLRASLDA (132 aa).

Belongs to the methylmalonyl-CoA mutase family. In terms of assembly, heterodimer of an alpha and a beta chain. Requires adenosylcob(III)alamin as cofactor.

It carries out the reaction (R)-methylmalonyl-CoA = succinyl-CoA. Its function is as follows. Catalyzes the reversible conversion of succinyl-CoA to (R)-methylmalonyl-CoA through a radical mechanism. Is involved in the fermentation of pyruvate to propanoate that occurs in Propionibacteria. This is Methylmalonyl-CoA mutase large subunit (mutB) from Propionibacterium freudenreichii subsp. shermanii.